The sequence spans 184 residues: MSWRSEHIWIDLITGSRKISNLCWAFTLFLGSLGFVLVGTYSYLGRNLISFFPLQQIIFFPQGIVMSFYGIAGLFISSYLWCTISWNVGSGYDLFNRKEGIVCIFRWGFPGINRRIFLRFLLKDIRSVRIEVEEGIYAGRVLYMDIRGHRAIPLTRTDENLTPGELEKKAAELAYFLRVPIEVF.

Transmembrane regions (helical) follow at residues 19–39 (ISNL…VLVG) and 57–77 (IIFF…LFIS).

The protein belongs to the Ycf4 family.

The protein localises to the plastid thylakoid membrane. Seems to be required for the assembly of the photosystem I complex. This is Photosystem I assembly protein Ycf4 from Cuscuta reflexa (Southern Asian dodder).